Consider the following 322-residue polypeptide: Outer membrane protein assembly factor BamC (322 aa).

The N-terminal stretch at 1-22 is a signal peptide; sequence MISLLAVAVLAGCSNPETRSQA.

It belongs to the BamC family. As to quaternary structure, part of the Bam complex.

It localises to the cell outer membrane. Functionally, part of the outer membrane protein assembly complex, which is involved in assembly and insertion of beta-barrel proteins into the outer membrane. The sequence is that of Outer membrane protein assembly factor BamC from Oceanimonas sp. (strain GK1 / IBRC-M 10197).